The primary structure comprises 381 residues: Cobalt-precorrin-5B C(1)-methyltransferase (381 aa).

The protein belongs to the CbiD family.

The enzyme catalyses Co-precorrin-5B + S-adenosyl-L-methionine = Co-precorrin-6A + S-adenosyl-L-homocysteine. Its pathway is cofactor biosynthesis; adenosylcobalamin biosynthesis; cob(II)yrinate a,c-diamide from sirohydrochlorin (anaerobic route): step 6/10. Its function is as follows. Catalyzes the methylation of C-1 in cobalt-precorrin-5B to form cobalt-precorrin-6A. The polypeptide is Cobalt-precorrin-5B C(1)-methyltransferase (Prochlorococcus marinus (strain NATL2A)).